A 379-amino-acid polypeptide reads, in one-letter code: Cytochrome b (379 aa).

A run of 4 helical transmembrane segments spans residues 33 to 53 (FGSL…FLAM), 77 to 98 (WLIR…FIHV), 113 to 133 (WNIG…GYVL), and 178 to 198 (FFAF…VHLL). The heme b site is built by H83 and H97. The heme b site is built by H182 and H196. H201 serves as a coordination point for a ubiquinone. The next 4 helical transmembrane spans lie at 226 to 246 (TKDL…ALFF), 288 to 308 (LGGV…PLLN), 320 to 340 (VTQV…WIGG), and 347 to 367 (FTTI…ILIP).

The protein belongs to the cytochrome b family. In terms of assembly, the cytochrome bc1 complex contains 11 subunits: 3 respiratory subunits (MT-CYB, CYC1 and UQCRFS1), 2 core proteins (UQCRC1 and UQCRC2) and 6 low-molecular weight proteins (UQCRH/QCR6, UQCRB/QCR7, UQCRQ/QCR8, UQCR10/QCR9, UQCR11/QCR10 and a cleavage product of UQCRFS1). This cytochrome bc1 complex then forms a dimer. The cofactor is heme b.

The protein localises to the mitochondrion inner membrane. Functionally, component of the ubiquinol-cytochrome c reductase complex (complex III or cytochrome b-c1 complex) that is part of the mitochondrial respiratory chain. The b-c1 complex mediates electron transfer from ubiquinol to cytochrome c. Contributes to the generation of a proton gradient across the mitochondrial membrane that is then used for ATP synthesis. The sequence is that of Cytochrome b (MT-CYB) from Akodon montensis (Montane grass mouse).